A 38-amino-acid chain; its full sequence is Large ribosomal subunit protein bL36 (38 aa).

This sequence belongs to the bacterial ribosomal protein bL36 family.

The sequence is that of Large ribosomal subunit protein bL36 from Psychrobacter cryohalolentis (strain ATCC BAA-1226 / DSM 17306 / VKM B-2378 / K5).